We begin with the raw amino-acid sequence, 172 residues long: Shikimate kinase (172 aa).

11–16 is a binding site for ATP; it reads GAGKST. Ser-15 lines the Mg(2+) pocket. The substrate site is built by Asp-33, Arg-57, and Gly-79. Arg-117 is a binding site for ATP. Residue Arg-136 participates in substrate binding. Arg-153 serves as a coordination point for ATP.

Belongs to the shikimate kinase family. In terms of assembly, monomer. Mg(2+) is required as a cofactor.

The protein localises to the cytoplasm. The catalysed reaction is shikimate + ATP = 3-phosphoshikimate + ADP + H(+). The protein operates within metabolic intermediate biosynthesis; chorismate biosynthesis; chorismate from D-erythrose 4-phosphate and phosphoenolpyruvate: step 5/7. Functionally, catalyzes the specific phosphorylation of the 3-hydroxyl group of shikimic acid using ATP as a cosubstrate. The polypeptide is Shikimate kinase (Pseudomonas paraeruginosa (strain DSM 24068 / PA7) (Pseudomonas aeruginosa (strain PA7))).